Reading from the N-terminus, the 1458-residue chain is ABC multidrug transporter B (1458 aa).

The next 5 membrane-spanning stretches (helical) occupy residues 30 to 50, 70 to 90, 102 to 122, 128 to 148, and 165 to 185; these read FSLL…VLII, LLWA…VLAV, ASIA…LLSC, STTP…FDIA, and IAIL…LEAV. A glycan (N-linked (GlcNAc...) asparagine) is linked at Asn-208. Residues 273-295 traverse the membrane as a helical segment; sequence WPLLSAVPPRACLAALNFCQPLL. The ABC transmembrane type-1 1 domain maps to 283–561; it reads ACLAALNFCQ…LVMALMTFVG (279 aa). Residue Asn-309 is glycosylated (N-linked (GlcNAc...) asparagine). The next 5 helical transmembrane spans lie at 314–334, 387–407, 411–431, 501–521, and 541–561; these read IGYG…VTMG, WQTI…IYLL, LGVA…GCLI, LGWT…YGIM, and LFAL…TFVG. An ABC transporter 1 domain is found at 626–853; it reads LTVKNATFAW…AGGYVSSFGL (228 aa). Asn-630 is a glycosylation site (N-linked (GlcNAc...) asparagine). 660 to 667 lines the ATP pocket; it reads GPSGCGKS. Asn-702, Asn-804, and Asn-879 each carry an N-linked (GlcNAc...) asparagine glycan. Residues 933–1182 form the ABC transmembrane type-1 2 domain; the sequence is PNGRTGYYLG…LVTFWTNLET (250 aa). A run of 6 helical transmembrane segments spans residues 940 to 960, 978 to 998, 1016 to 1036, 1040 to 1060, 1125 to 1145, and 1156 to 1176; these read YLGI…IGCW, LLAT…SGSI, AAIN…LMGI, YAAI…KVYL, LTLT…VLVV, and VGVA…LVTF. Residues 1219–1449 enclose the ABC transporter 2 domain; the sequence is IEFKSVSAEY…EGSYFSRLYA (231 aa). Residue 1252 to 1259 coordinates ATP; it reads GRTGSGKT. Residue Asn-1316 is glycosylated (N-linked (GlcNAc...) asparagine).

It belongs to the ABC transporter superfamily. ABCC family. Conjugate transporter (TC 3.A.1.208) subfamily.

The protein resides in the cell membrane. In terms of biological role, pleiotropic ABC efflux transporter that may be involved in A.fumigatus adaptation to azoles such as vorizonazole. This is ABC multidrug transporter B from Aspergillus fumigatus (strain ATCC MYA-4609 / CBS 101355 / FGSC A1100 / Af293) (Neosartorya fumigata).